A 129-amino-acid polypeptide reads, in one-letter code: Large ribosomal subunit protein bL12 (129 aa).

Belongs to the bacterial ribosomal protein bL12 family. Homodimer. Part of the ribosomal stalk of the 50S ribosomal subunit. Forms a multimeric L10(L12)X complex, where L10 forms an elongated spine to which 2 to 4 L12 dimers bind in a sequential fashion. Binds GTP-bound translation factors.

Forms part of the ribosomal stalk which helps the ribosome interact with GTP-bound translation factors. Is thus essential for accurate translation. This is Large ribosomal subunit protein bL12 from Protochlamydia amoebophila (strain UWE25).